Here is a 448-residue protein sequence, read N- to C-terminus: Exodeoxyribonuclease 7 large subunit (448 aa).

This sequence belongs to the XseA family. In terms of assembly, heterooligomer composed of large and small subunits.

Its subcellular location is the cytoplasm. The enzyme catalyses Exonucleolytic cleavage in either 5'- to 3'- or 3'- to 5'-direction to yield nucleoside 5'-phosphates.. Bidirectionally degrades single-stranded DNA into large acid-insoluble oligonucleotides, which are then degraded further into small acid-soluble oligonucleotides. This chain is Exodeoxyribonuclease 7 large subunit, found in Shewanella sp. (strain MR-4).